The sequence spans 286 residues: 4-hydroxybenzoate octaprenyltransferase (286 aa).

7 helical membrane-spanning segments follow: residues 20-40, 43-63, 95-115, 142-162, 167-187, 210-230, and 234-254; these read IGTL…AGGM, LKVL…GCII, ILFA…NPLV, FLGV…TGEV, WWLF…YAMV, QIIG…GWAA, and LVYG…QKLI.

This sequence belongs to the UbiA prenyltransferase family. The cofactor is Mg(2+).

Its subcellular location is the cell inner membrane. It carries out the reaction all-trans-octaprenyl diphosphate + 4-hydroxybenzoate = 4-hydroxy-3-(all-trans-octaprenyl)benzoate + diphosphate. The protein operates within cofactor biosynthesis; ubiquinone biosynthesis. Catalyzes the prenylation of para-hydroxybenzoate (PHB) with an all-trans polyprenyl group. Mediates the second step in the final reaction sequence of ubiquinone-8 (UQ-8) biosynthesis, which is the condensation of the polyisoprenoid side chain with PHB, generating the first membrane-bound Q intermediate 3-octaprenyl-4-hydroxybenzoate. The sequence is that of 4-hydroxybenzoate octaprenyltransferase from Shewanella sediminis (strain HAW-EB3).